The sequence spans 331 residues: Biotin synthase (331 aa).

One can recognise a Radical SAM core domain in the interval Pro52–Arg277. Residues Cys67, Cys71, and Cys74 each coordinate [4Fe-4S] cluster. [2Fe-2S] cluster-binding residues include Cys110, Cys143, Cys202, and Arg272.

This sequence belongs to the radical SAM superfamily. Biotin synthase family. Homodimer. It depends on [4Fe-4S] cluster as a cofactor. The cofactor is [2Fe-2S] cluster.

It catalyses the reaction (4R,5S)-dethiobiotin + (sulfur carrier)-SH + 2 reduced [2Fe-2S]-[ferredoxin] + 2 S-adenosyl-L-methionine = (sulfur carrier)-H + biotin + 2 5'-deoxyadenosine + 2 L-methionine + 2 oxidized [2Fe-2S]-[ferredoxin]. It functions in the pathway cofactor biosynthesis; biotin biosynthesis; biotin from 7,8-diaminononanoate: step 2/2. Its function is as follows. Catalyzes the conversion of dethiobiotin (DTB) to biotin by the insertion of a sulfur atom into dethiobiotin via a radical-based mechanism. This is Biotin synthase from Mycolicibacterium vanbaalenii (strain DSM 7251 / JCM 13017 / BCRC 16820 / KCTC 9966 / NRRL B-24157 / PYR-1) (Mycobacterium vanbaalenii).